We begin with the raw amino-acid sequence, 137 residues long: Transcription antitermination protein NusB (137 aa).

Belongs to the NusB family.

Functionally, involved in transcription antitermination. Required for transcription of ribosomal RNA (rRNA) genes. Binds specifically to the boxA antiterminator sequence of the ribosomal RNA (rrn) operons. In Clavibacter michiganensis subsp. michiganensis (strain NCPPB 382), this protein is Transcription antitermination protein NusB.